Reading from the N-terminus, the 487-residue chain is Photosystem II CP43 reaction center protein (487 aa).

The propeptide occupies 1–28 (MKVFVLGWLLKINLMKTLYSQRRFYHVE). Transmembrane regions (helical) follow at residues 83–107 (LFEV…PHLA), 148–169 (LIGP…RDKN), 192–214 (KSLF…RFVS), 269–289 (KPFA…LSYS), and 305–326 (WYNN…ASQA). E381 provides a ligand contact to [CaMn4O5] cluster. A helical membrane pass occupies residues 461-485 (RARAAAAGFEKGINRENEPVLSMRP).

This sequence belongs to the PsbB/PsbC family. PsbC subfamily. PSII is composed of 1 copy each of membrane proteins PsbA, PsbB, PsbC, PsbD, PsbE, PsbF, PsbH, PsbI, PsbJ, PsbK, PsbL, PsbM, PsbT, PsbX, PsbY, PsbZ, Psb30/Ycf12, at least 3 peripheral proteins of the oxygen-evolving complex and a large number of cofactors. It forms dimeric complexes. Binds multiple chlorophylls and provides some of the ligands for the Ca-4Mn-5O cluster of the oxygen-evolving complex. It may also provide a ligand for a Cl- that is required for oxygen evolution. PSII binds additional chlorophylls, carotenoids and specific lipids. serves as cofactor.

It is found in the plastid. The protein resides in the chloroplast thylakoid membrane. In terms of biological role, one of the components of the core complex of photosystem II (PSII). It binds chlorophyll and helps catalyze the primary light-induced photochemical processes of PSII. PSII is a light-driven water:plastoquinone oxidoreductase, using light energy to abstract electrons from H(2)O, generating O(2) and a proton gradient subsequently used for ATP formation. This chain is Photosystem II CP43 reaction center protein, found in Porphyra purpurea (Red seaweed).